A 370-amino-acid chain; its full sequence is 3-dehydroquinate synthase (370 aa).

NAD(+) contacts are provided by residues 112–116 (GVVGD), 136–137 (TS), Lys-149, Lys-158, and 176–179 (TLRT). Zn(2+) contacts are provided by Glu-191, His-254, and His-276.

It belongs to the sugar phosphate cyclases superfamily. Dehydroquinate synthase family. Co(2+) serves as cofactor. Zn(2+) is required as a cofactor. It depends on NAD(+) as a cofactor.

Its subcellular location is the cytoplasm. It catalyses the reaction 7-phospho-2-dehydro-3-deoxy-D-arabino-heptonate = 3-dehydroquinate + phosphate. It participates in metabolic intermediate biosynthesis; chorismate biosynthesis; chorismate from D-erythrose 4-phosphate and phosphoenolpyruvate: step 2/7. In terms of biological role, catalyzes the conversion of 3-deoxy-D-arabino-heptulosonate 7-phosphate (DAHP) to dehydroquinate (DHQ). The protein is 3-dehydroquinate synthase of Xanthomonas campestris pv. campestris (strain 8004).